The sequence spans 287 residues: MEMO1 family protein MJ0403 (287 aa).

Belongs to the MEMO1 family.

In Methanocaldococcus jannaschii (strain ATCC 43067 / DSM 2661 / JAL-1 / JCM 10045 / NBRC 100440) (Methanococcus jannaschii), this protein is MEMO1 family protein MJ0403.